Here is a 656-residue protein sequence, read N- to C-terminus: tRNA(Met) cytidine acetyltransferase TmcA (656 aa).

ATP is bound by residues Q145, 167 to 176, and R291; that span reads GRGKSALLGM. The region spanning 368–542 is the N-acetyltransferase domain; it reads SEGKYNRQFF…SGCYSAIALK (175 aa). Residues 474 to 476, 481 to 487, and E510 contribute to the acetyl-CoA site; these read IAV and QQKGIGQ.

It belongs to the RNA cytidine acetyltransferase family. TmcA subfamily.

Its subcellular location is the cytoplasm. The enzyme catalyses cytidine(34) in elongator tRNA(Met) + acetyl-CoA + ATP + H2O = N(4)-acetylcytidine(34) in elongator tRNA(Met) + ADP + phosphate + CoA + H(+). Its function is as follows. Catalyzes the formation of N(4)-acetylcytidine (ac(4)C) at the wobble position of tRNA(Met), by using acetyl-CoA as an acetyl donor and ATP (or GTP). This is tRNA(Met) cytidine acetyltransferase TmcA from Haemophilus influenzae (strain ATCC 51907 / DSM 11121 / KW20 / Rd).